A 456-amino-acid polypeptide reads, in one-letter code: MTQLTCFKAYDIRGELGEELNEDIAYRIGRAYGEFLKPGKIVVGGDVRLTSESLKLALARGLMDAGTDVLDIGLSGTEEIYFATFHLGVDGGIEVTASHNPMNYNGMKLVRENAKPISGDTGLRDIQRLAEENQFPPVDPARRGTLRQISVLKEYVDHLMGYVDLANFTRPLKLVVNSGNGAAGHVIDEVEKRFAAAGVPVTFIKVHHQPDGHFPNGIPNPLLPECRQDTADAVREHQADMGIAFDGDFDRCFLFDDEASFIEGYYIVGLLAEAFLQKQPGAKIIHDPRLTWNTVDIVTRNGGQPVMSKTGHAFIKERMRQEDAIYGGEMSAHHYFRDFAYCDSGMIPWLLVAELLCLKNSSLKSLVADRQAAFPASGEINRKLGNAAEAIARIRAQYEPAAAHIDTTDGISIEYPEWRFNLRTSNTEPVVRLNVESRADTALMNAKTEEILALLK.

Ser98 (phosphoserine intermediate) is an active-site residue. Mg(2+) is bound by residues Ser98, Asp246, Asp248, and Asp250.

It belongs to the phosphohexose mutase family. Mg(2+) is required as a cofactor.

It carries out the reaction alpha-D-mannose 1-phosphate = D-mannose 6-phosphate. The protein operates within nucleotide-sugar biosynthesis; GDP-alpha-D-mannose biosynthesis; alpha-D-mannose 1-phosphate from D-fructose 6-phosphate: step 2/2. It participates in bacterial outer membrane biogenesis; LPS O-antigen biosynthesis. Functionally, involved in GDP-mannose biosynthesis which serves as the activated sugar nucleotide precursor for mannose residues in cell surface polysaccharides. This enzyme participates in synthesis of the LPS O9 antigen. In Escherichia coli, this protein is Phosphomannomutase (manB).